Here is a 121-residue protein sequence, read N- to C-terminus: UPF0102 protein VP0448 (121 aa).

The protein belongs to the UPF0102 family.

The protein is UPF0102 protein VP0448 of Vibrio parahaemolyticus serotype O3:K6 (strain RIMD 2210633).